Reading from the N-terminus, the 899-residue chain is Autophagy-related protein 9 (899 aa).

The tract at residues 1–173 (MASNLLSRLL…DDRGGAPVRD (173 aa)) is disordered. The Cytoplasmic portion of the chain corresponds to 1 to 224 (MASNLLSRLL…SGIYSMILRR (224 aa)). Over residues 23–33 (SNNQNRRTSSS) the composition is skewed to low complexity. A compositionally biased stretch (polar residues) spans 63–73 (ASSSHMTTESR). The segment covering 90 to 104 (AARAPAWRQPAPARA) has biased composition (low complexity). Residues 124-142 (DPPPNPHPRPDGLPPPVPG) are compositionally biased toward pro residues. The segment covering 151–160 (QWETTRQQQR) has biased composition (polar residues). A helical transmembrane segment spans residues 225–245 (TLSLLQSAFVVGFMTFLGWCI). Over 246-270 (DYSKLSGSNKLSQVLVPKCTKEIHG) the chain is Lumenal. A helical transmembrane segment spans residues 271 to 291 (FWIFALWVFTIYWLYSFYGLL). Topologically, residues 292–441 (TDIPRLRAMH…RELVRRLRGR (150 aa)) are cytoplasmic. An intramembrane segment occupies 442-462 (FFWTGIISIICAPFAVVFVLA). Topologically, residues 463–527 (SYLFKYFTEY…AQFPKDKTEQ (65 aa)) are cytoplasmic. The chain crosses the membrane as a helical span at residues 528 to 548 (ISSFVAFIAGAFASVLVAFTL). The Lumenal segment spans residues 549 to 552 (LDSE). Residues 553–573 (LFLTFEISPGKTAIFWIGVLT) form a helical membrane-spanning segment. At 574 to 629 (TIYRVARGSSPQEDQVTDPSYYLDHVIYHTRYKPDSWQDRLHTDEVRAEFAKLYQP) the chain is on the cytoplasmic side. An intramembrane segment occupies 630–650 (KILIFAEEILSMVVTPFLLMF). Residues 651 to 899 (RLPQCSERIV…AEGRGAGVGV (249 aa)) are Cytoplasmic-facing. The disordered stretch occupies residues 769-876 (DVGARGTSRG…EEEAPGANRG (108 aa)). Positions 851–860 (IGDSWRTSRL) are enriched in polar residues.

Belongs to the ATG9 family. As to quaternary structure, homotrimer; forms a homotrimer with a central pore that forms a path between the two membrane leaflets. Post-translationally, phosphorylated by ATG1. ATG1 phosphorylation is required for preautophagosome elongation.

The protein resides in the preautophagosomal structure membrane. The protein localises to the cytoplasmic vesicle membrane. It is found in the golgi apparatus membrane. It localises to the endoplasmic reticulum membrane. The enzyme catalyses a 1,2-diacyl-sn-glycero-3-phosphocholine(in) = a 1,2-diacyl-sn-glycero-3-phosphocholine(out). It carries out the reaction a 1,2-diacyl-sn-glycero-3-phospho-L-serine(in) = a 1,2-diacyl-sn-glycero-3-phospho-L-serine(out). The catalysed reaction is a 1,2-diacyl-sn-glycero-3-phosphoethanolamine(in) = a 1,2-diacyl-sn-glycero-3-phosphoethanolamine(out). It catalyses the reaction a 1,2-diacyl-sn-glycero-3-phospho-(1D-myo-inositol-3-phosphate)(in) = a 1,2-diacyl-sn-glycero-3-phospho-(1D-myo-inositol-3-phosphate)(out). In terms of biological role, phospholipid scramblase involved in autophagy and cytoplasm to vacuole transport (Cvt) vesicle formation. Cycles between the preautophagosomal structure/phagophore assembly site (PAS) and the cytoplasmic vesicle pool and supplies membrane for the growing autophagosome. Lipid scramblase activity plays a key role in preautophagosomal structure/phagophore assembly by distributing the phospholipids that arrive through ATG2 from the cytoplasmic to the luminal leaflet of the bilayer, thereby driving autophagosomal membrane expansion. Required for mitophagy. Also involved in endoplasmic reticulum-specific autophagic process and is essential for the survival of cells subjected to severe ER stress. Different machineries are required for anterograde trafficking to the PAS during either the Cvt pathway or bulk autophagy and for retrograde trafficking. The chain is Autophagy-related protein 9 (ATG9) from Phaeosphaeria nodorum (strain SN15 / ATCC MYA-4574 / FGSC 10173) (Glume blotch fungus).